We begin with the raw amino-acid sequence, 286 residues long: ATP synthase gamma chain (286 aa).

The protein belongs to the ATPase gamma chain family. In terms of assembly, F-type ATPases have 2 components, CF(1) - the catalytic core - and CF(0) - the membrane proton channel. CF(1) has five subunits: alpha(3), beta(3), gamma(1), delta(1), epsilon(1). CF(0) has three main subunits: a, b and c.

Its subcellular location is the cell membrane. In terms of biological role, produces ATP from ADP in the presence of a proton gradient across the membrane. The gamma chain is believed to be important in regulating ATPase activity and the flow of protons through the CF(0) complex. The protein is ATP synthase gamma chain of Bacillus mycoides (strain KBAB4) (Bacillus weihenstephanensis).